The following is a 288-amino-acid chain: ATP synthase gamma chain (288 aa).

This sequence belongs to the ATPase gamma chain family. In terms of assembly, F-type ATPases have 2 components, CF(1) - the catalytic core - and CF(0) - the membrane proton channel. CF(1) has five subunits: alpha(3), beta(3), gamma(1), delta(1), epsilon(1). CF(0) has three main subunits: a, b and c.

It is found in the cell inner membrane. In terms of biological role, produces ATP from ADP in the presence of a proton gradient across the membrane. The gamma chain is believed to be important in regulating ATPase activity and the flow of protons through the CF(0) complex. In Vibrio parahaemolyticus serotype O3:K6 (strain RIMD 2210633), this protein is ATP synthase gamma chain.